A 499-amino-acid polypeptide reads, in one-letter code: MMLSNLLILPMLLPFLCALILVFLKNNDRISKYLYLGTMTITTIISLMLLIYVQRHRPITLDFGGWSAPFGIQFLGDSLSLIMVTTASFVITLIMAYGFGRGEHKANRYHLPSFILFLSVGVIGSFLTSDLFNLYVMFEIMLLASFVLITLGQSVEQLRAAIIYVVLNIIGSWLFLLGIGLLYKTVGTLNFSHIAMRLNDMGDNRTVTMISLIFLVAFSAKAALVLFMWLPKAYAVLNTELAALFAALMTKVGAYALIRFFTLLFDQHNDLIHPLLATMAAITMVIGAIGVIAYKDIKKIAAYQVIISIGFIILGLGTNTFAGINGAIFYLVNDIVVKTLLFFIIGSLVYITGYRQYQYLNGLAKKEPLFGVAFIIMIFAIGGVPPFSGFPGKVLIFQGALQNGNYIGLALMIITSLIAMYSLFRILFYMYFGDKDGEEVNFKKIPLYRKRILSILVVVVIAIGIAAPVVLNVTSDATELNTSDQLYQKLVNPHLKGED.

The next 14 helical transmembrane spans lie at 3–23 (LSNL…ILVF), 33–53 (YLYL…LIYV), 79–99 (LSLI…AYGF), 109–129 (YHLP…FLTS), 131–151 (LFNL…LITL), 162–182 (IIYV…IGLL), 210–230 (ISLI…FMWL), 241–261 (LAAL…IRFF), 272–292 (IHPL…IGVI), 309–329 (IGFI…GAIF), 331–351 (LVND…LVYI), 370–390 (FGVA…FSGF), 404–424 (GNYI…YSLF), and 452–472 (ILSI…VVLN).

This sequence belongs to the CPA3 antiporters (TC 2.A.63) subunit D family. In terms of assembly, may form a heterooligomeric complex that consists of seven subunits: mnhA2, mnhB2, mnhC2, mnhD2, mnhE2, mnhF2 and mnhG2.

The protein localises to the cell membrane. Its function is as follows. Expression of the mnh2 operon in E.coli is not able to catalyze Na(+)Li(+)/H(+) antiport. It does however confer higher growth rates than the control strain at up to pH 9.5. The operon may encode an NADH-ubiquinone oxidoreductase. The chain is Putative antiporter subunit mnhD2 (mnhD2) from Staphylococcus aureus.